Reading from the N-terminus, the 1772-residue chain is Gag-Pro-Pol polyprotein (1772 aa).

Glycine 2 is lipidated: N-myristoyl glycine; by host. A propeptide spanning residues 101–162 (AAVAQTEEIL…TKKPKRFPVL (62 aa)) is cleaved from the precursor. A compositionally biased stretch (polar residues) spans 113-126 (SSHTELTTKPSQNP). The tract at residues 113-149 (SSHTELTTKPSQNPDLDLISLDSDDEGAKGSSLKDKN) is disordered. The segment covering 138 to 149 (EGAKGSSLKDKN) has biased composition (basic and acidic residues). Positions 203 to 206 (PPPY) match the PPXY motif motif. A PTAP/PSAP motif motif is present at residues 211 to 214 (PSAP). The stretch at 217 to 258 (MAVVNPKEELKEKIAQLEEQIKLEELHQALISKLQKLKTGNE) forms a coiled coil. The interval 258 to 282 (ETVTSPETAGGFSRTPHWPGQHIPK) is disordered. The segment at 548-565 (GCCFKCGRKGHFAKNCHE) adopts a CCHC-type zinc-finger fold. Residues 593 to 626 (KSKTDSQGNPLPPHQGNRTEGPAPGPETSLWGGQ) are disordered. Residues 781-857 (FTGLIDTGAD…LPVNLWGRDL (77 aa)) enclose the Peptidase A2 domain. Aspartate 786 functions as the Protease; shared with dimeric partner in the catalytic mechanism. The region spanning 868 to 914 (PSDIVTAQMLAQGYSPGKGLGKNENGILHPIPNQGQFDKKGFGNFLT) is the G-patch domain. Residues 960 to 1148 (LEAGHITESN…DPYTYLGFEL (189 aa)) form the Reverse transcriptase domain. Residues aspartate 1025, aspartate 1100, aspartate 1101, aspartate 1371, glutamate 1400, aspartate 1421, and aspartate 1485 each coordinate Mg(2+). The RNase H type-1 domain maps to 1362–1493 (LNNALLVFTD…ADLATKTVAS (132 aa)). The Integrase-type zinc-finger motif lies at 1497–1538 (TNLESAQNAHTLHHLNAQTLKLMFNIPREQARQIVRQCPICA). Residues histidine 1506, histidine 1510, cysteine 1534, and cysteine 1537 each coordinate Zn(2+). The region spanning 1551 to 1720 (RGLLPNMIWQ…NPRKQFAMVK (170 aa)) is the Integrase catalytic domain. Mg(2+) is bound by residues aspartate 1562, aspartate 1619, and glutamate 1655. Positions 1717–1766 (AMVKWKDPLDNTWPWPDPVIIWGRGSVCVYSQTHDAARWLPERLVKQIPN) form a DNA-binding region, integrase-type.

This sequence belongs to the retroviral Pol polyprotein family. As to quaternary structure, homodimer. Interacts with the G-patch peptide. In terms of assembly, interacts with the reverse transcriptase/ribonuclease H. As to quaternary structure, homotrimer. Mg(2+) is required as a cofactor. Released by autocatalytic processing. The protease can undergo further autoprocessing to yield 2 shorter but enzymatically active forms of 12 kDa and 13 kDa. In terms of processing, myristoylated. Myristoylation of the matrix (MA) domain mediates the transport and binding of Gag polyproteins to the host plasma membrane and is required for the assembly of viral particles. Post-translationally, specific enzymatic cleavages in vivo yield mature proteins.

It is found in the virion. It carries out the reaction DNA(n) + a 2'-deoxyribonucleoside 5'-triphosphate = DNA(n+1) + diphosphate. The catalysed reaction is Endonucleolytic cleavage to 5'-phosphomonoester.. It catalyses the reaction dUTP + H2O = dUMP + diphosphate + H(+). Functionally, matrix protein. In terms of biological role, nucleocapsid protein p14: Nucleocapsid protein. Capsid protein. Its function is as follows. The aspartyl protease mediates proteolytic cleavages of Gag and Gag-Pol polyproteins during or shortly after the release of the virion from the plasma membrane. Cleavages take place as an ordered, step-wise cascade to yield mature proteins. This process is called maturation. Displays maximal activity during the budding process just prior to particle release from the cell. Functionally, enhances the activity of the reverse transcriptase. May be part of the mature RT. In terms of biological role, RT is a multifunctional enzyme that converts the viral dimeric RNA genome into dsDNA in the cytoplasm, shortly after virus entry into the cell. This enzyme displays a DNA polymerase activity that can copy either DNA or RNA templates, and a ribonuclease H (RNase H) activity that cleaves the RNA strand of RNA-DNA heteroduplexes in a partially processive 3' to 5' endonucleasic mode. Conversion of viral genomic RNA into dsDNA requires many steps. A tRNA binds to the primer-binding site (PBS) situated at the 5' end of the viral RNA. RT uses the 3' end of the tRNA primer to perfom a short round of RNA-dependent minus-strand DNA synthesis. The reading proceeds through the U5 region and ends after the repeated (R) region which is present at both ends of viral RNA. The portion of the RNA-DNA heteroduplex is digested by the RNase H, resulting in a ssDNA product attached to the tRNA primer. This ssDNA/tRNA hybridizes with the identical R region situated at the 3' end of viral RNA. This template exchange, known as minus-strand DNA strong stop transfer, can be either intra- or intermolecular. RT uses the 3' end of this newly synthesized short ssDNA to perfom the RNA-dependent minus-strand DNA synthesis of the whole template. RNase H digests the RNA template except for a polypurine tract (PPT) situated at the 5' end of the genome. It is not clear if both polymerase and RNase H activities are simultaneous. RNase H probably can proceed both in a polymerase-dependent (RNA cut into small fragments by the same RT performing DNA synthesis) and a polymerase-independent mode (cleavage of remaining RNA fragments by free RTs). Secondly, RT performs DNA-directed plus-strand DNA synthesis using the PPT that has not been removed by RNase H as primers. PPT and tRNA primers are then removed by RNase H. The 3' and 5' ssDNA PBS regions hybridize to form a circular dsDNA intermediate. Strand displacement synthesis by RT to the PBS and PPT ends produces a blunt ended, linear dsDNA copy of the viral genome that includes long terminal repeats (LTRs) at both ends. Catalyzes viral DNA integration into the host chromosome, by performing a series of DNA cutting and joining reactions. The sequence is that of Gag-Pro-Pol polyprotein (pol) from Macaca mulatta (Rhesus macaque).